Here is a 310-residue protein sequence, read N- to C-terminus: Olfactory receptor 2A25 (310 aa).

Residues 1–24 (MGGNQTSITEFLLLGFPIGPRIQM) lie on the Extracellular side of the membrane. N-linked (GlcNAc...) asparagine glycosylation occurs at asparagine 4. The chain crosses the membrane as a helical span at residues 25–48 (LLFGLFSLFYIFILLGNGTILGLI). Topologically, residues 49–56 (SLDSRLHT) are cytoplasmic. The helical transmembrane segment at 57 to 78 (PMYFFLSHLAVVDIACACSTVP) threads the bilayer. Topologically, residues 79 to 99 (QMLVNLLHPAKPISFAGCMTQ) are extracellular. A disulfide bridge connects residues cysteine 96 and cysteine 188. The chain crosses the membrane as a helical span at residues 100–119 (MFLFLSFAHTECLLLVVMSY). Residues 120–138 (DRYVAICHPLRYSTIMTWK) lie on the Cytoplasmic side of the membrane. A helical transmembrane segment spans residues 139 to 157 (VCITLALTSWILGVLLALV). Residues 158–195 (HLVLLLPLSFCGPQKLNHFFCEIMAVLKLACADTHINE) lie on the Extracellular side of the membrane. The chain crosses the membrane as a helical span at residues 196–218 (VMVLAGAVSVLVGAFFSTVISYV). Residues 219–235 (HILCAILKIQSGEGCQK) are Cytoplasmic-facing. A helical membrane pass occupies residues 236–258 (AFSICSSHLCVVGLFYGTAIIMY). The Extracellular segment spans residues 259–271 (VEPQYESPKEQKK). Residues 272 to 291 (YLLLFHSLFNPMLNPLIYSL) form a helical membrane-spanning segment. Residues 292–310 (RNKEVQGTLKRMLEKKRTS) are Cytoplasmic-facing.

Belongs to the G-protein coupled receptor 1 family.

The protein resides in the cell membrane. Odorant receptor. The sequence is that of Olfactory receptor 2A25 (OR2A25) from Homo sapiens (Human).